The chain runs to 190 residues: Imidazoleglycerol-phosphate dehydratase (190 aa).

This sequence belongs to the imidazoleglycerol-phosphate dehydratase family.

It localises to the cytoplasm. The enzyme catalyses D-erythro-1-(imidazol-4-yl)glycerol 3-phosphate = 3-(imidazol-4-yl)-2-oxopropyl phosphate + H2O. The protein operates within amino-acid biosynthesis; L-histidine biosynthesis; L-histidine from 5-phospho-alpha-D-ribose 1-diphosphate: step 6/9. The polypeptide is Imidazoleglycerol-phosphate dehydratase (Methanococcus maripaludis (strain C7 / ATCC BAA-1331)).